Reading from the N-terminus, the 128-residue chain is Cytochrome c' (128 aa).

Residues glutamine 13, glutamine 17, glutamate 69, threonine 70, cysteine 118, cysteine 121, and histidine 122 each coordinate heme c.

Homodimer. Binds 1 heme c group covalently per subunit.

In terms of biological role, cytochrome c' is the most widely occurring bacterial c-type cytochrome. Cytochromes c' are high-spin proteins and the heme has no sixth ligand. Their exact function is not known. The protein is Cytochrome c' of Magnetospirillum molischianum (Rhodospirillum molischianum).